Consider the following 231-residue polypeptide: Probable glutathione S-transferase GSTU1 (231 aa).

Positions 5–84 (KELVLLDFWV…YLDDAFPGTP (80 aa)) constitute a GST N-terminal domain. Glutathione is bound by residues serine 15, lysine 42, isoleucine 56, and 68–69 (ES). The 124-residue stretch at 97–220 (AAYARATARF…LPSPEKVYDF (124 aa)) folds into the GST C-terminal domain.

This sequence belongs to the GST superfamily. Tau family.

It carries out the reaction RX + glutathione = an S-substituted glutathione + a halide anion + H(+). Functionally, conjugation of reduced glutathione to a wide number of exogenous and endogenous hydrophobic electrophiles. This Oryza sativa subsp. japonica (Rice) protein is Probable glutathione S-transferase GSTU1 (GSTU1).